A 426-amino-acid polypeptide reads, in one-letter code: Coiled-coil domain-containing protein 86 (426 aa).

Residues 1–426 form a disordered region; sequence MDTPLRRSRR…QPPQRPVAKV (426 aa). A Phosphoserine modification is found at Ser-18. Positions 33–49 are enriched in basic and acidic residues; that stretch reads ALVDFKSNSEETGELKS. Pro residues predominate over residues 55 to 145; the sequence is LSLPSPGPQP…SLPSPGPQPE (91 aa). Ser-59 is modified (phosphoserine). The residue at position 66 (Thr-66) is a Phosphothreonine. Residues Ser-67, Ser-70, Ser-161, Ser-172, Ser-183, Ser-191, Ser-194, Ser-225, Ser-252, Ser-253, and Ser-283 each carry the phosphoserine modification. Residues 241–255 are compositionally biased toward polar residues; that stretch reads QPAQELTVQAPSSPE. Over residues 304-320 the composition is skewed to basic residues; that stretch reads GKPKSGRVWKDRSKKRF. Residues 339–383 are compositionally biased toward basic and acidic residues; the sequence is ERQERKLAKDFARHLEEEKQRRRQEKKERRAENLRRRLENERKAE. The stretch at 346-389 forms a coiled coil; sequence AKDFARHLEEEKQRRRQEKKERRAENLRRRLENERKAEIVQVIR. A compositionally biased stretch (basic residues) spans 392-402; that stretch reads AKLKKAKKKQL. Arg-408 carries the post-translational modification Citrulline.

Post-translationally, citrullinated by PADI4. As to expression, highly expressed in testis. Also expressed in heart, liver, kidney.

The protein localises to the nucleus. It is found in the chromosome. The protein resides in the nucleolus. In terms of biological role, required for proper chromosome segregation during mitosis and error-free mitotic progression. The protein is Coiled-coil domain-containing protein 86 of Mus musculus (Mouse).